The sequence spans 397 residues: MSVYRLFTVSIMDMCVLKANCKDPLGFTVEYTCVFGISSPIPGLHGGEHVNSYGEGVCVITFHNKDGRVFWFIIEKLPKKYTYPISPRFTPQDASEFCGRLADVHVFNDVTVGHLWRNRTVVSMNALEEGLLSTWSFERMVLLGDSVHKMTPNIGQGANTAIEDAAALASLIHQMINPMTPQNASKAAIGHLFQKFQDLRMSRVQSTVQRAHFGARFHTRDDHLKALVGRYIFPYVGNLVMARTVKVIGGGHKIEFLPPPKRSMPWTAQTDHSQHKMHGSKVLWAYLSHPDQHWSDDPRGTAQLRSQSLGTHRTSTVGRTLFIELVIVMIDVVYARQDIGEDVNAGVKDMAVQSRNSMRFLPYVLSYGSTESLLAAGWRQVWVFRLLSYLFGALLGL.

Tyr53 is a catalytic residue. FAD-binding residues include Asp145 and Ala158.

Belongs to the paxM FAD-dependent monooxygenase family. The cofactor is FAD.

It participates in secondary metabolite biosynthesis; terpenoid biosynthesis. In terms of biological role, FAD-dependent monooxygenase; part of the gene cluster that mediates the biosynthesis of terretonin, a fungal meroterpenoid that acts as a mycotoxin. The first step of the pathway is the synthesis of 3,5-dimethylorsellinic acid (DMOA) by the polyketide synthase trt4. DMOA is then prenylated into farnesyl-DMOA by the polyprenyl transferase trt2. Methylation by the methyltransferase trt5 then leads to farnesyl-DMOA methyl ester which is further subject to epoxidation by the FAD-dependent monooxygenase trt8 to yield epoxyfarnesyl-DMOA methyl ester. Cyclization of epoxyfarnesyl-DMOA methyl ester by the terpene cyclase trt1 leads to a tetracycle intermediate which is in turn converted to preterretonin. Dehydrogenase trt9 comes next to transform preterretonin to preterrenoid. The FAD-dependent monooxygenase trt3 is then required for the C-hydroxylation at C16 of preterrenoid to yield terrenoid. The cytochrome P450 trt6 catalyzes three successive oxidations to transform terrenoid into an unstable intermediate, which then undergoes the D-ring expansion and unusual rearrangement of the methoxy group to afford the core skeleton of terretonin. Trt14 catalyzes the D-ring expansion of terretonin involving intramolecular methoxy rearrangement as well as the hydrolysis of the expanded D-ring and the methyl ester moiety. Finally, the nonheme iron-dependent dioxygenase trt7 accomplishes the last two oxidation reactions steps to complete the biosynthesis of terretonin. Terretonin C is produced via spontaneous decarboxylation of the terretonin precursor. Another shunt product of the terretonin biosynthesis is dihydrofarnesyl-DMOA, derived from epoxyfarnesyl-DMOA through hydrolysis of the epoxide. This Aspergillus terreus (strain NIH 2624 / FGSC A1156) protein is FAD-dependent monooxygenase trt8.